A 184-amino-acid polypeptide reads, in one-letter code: MPSNSGDDNVLQVLIKNFDVLALPLVTLVYPLYASVKAIETRSLPEDEQWLTYWVLYALISLFELTFSKPLEWFPIWPYMKLFGICWLVLPQFNGAEHIYKHFIRPFYRDPQRATTKIWYVPHKKFNFFPKRDDDDILTAAEKYMEQHGTEAFERMIVKKDSYERGRSSRGINNHMIFDDDYRY.

The next 3 membrane-spanning stretches (helical) occupy residues 13-33, 51-71, and 73-93; these read VLIK…YPLY, LTYW…SKPL, and WFPI…LPQF.

This sequence belongs to the DP1 family. As to expression, predominantly expressed in flower buds and stem.

The protein localises to the membrane. The sequence is that of HVA22-like protein c (HVA22C) from Arabidopsis thaliana (Mouse-ear cress).